A 166-amino-acid chain; its full sequence is Spiderine-1b (166 aa).

Residues 1–18 (MKFALVLLGICAFYLVNA) form the signal peptide. The propeptide at 19 to 58 (TGDLETELEASELQELQEALDLIGETSLESLEAEELEEAR) is removed in mature form. Positions 59-99 (KFKWGKLFSAAKKLYKKGKKLSKNKNFKKALKFGKQLAKNL) are linear cationic cytotoxin domain. In terms of domain architecture, Oxytoxin-type inhibitor cystine knot (ICK) spans 113 to 166 (NNKCWAIGTTCSDDCDCCPEHHCHCPAGKWLPGLFRCTCQVTESDKVNKCPPAE). 5 disulfides stabilise this stretch: cysteine 116–cysteine 130, cysteine 123–cysteine 135, cysteine 127–cysteine 162, cysteine 129–cysteine 151, and cysteine 137–cysteine 149.

It belongs to the spiderine family. Cationic/spiderine subfamily. As to expression, expressed by the venom gland.

It is found in the secreted. Has antimicrobial, insecticidal, cytolytic and cytotoxic activity. The sequence is that of Spiderine-1b from Oxyopes takobius (Lynx spider).